We begin with the raw amino-acid sequence, 55 residues long: Large ribosomal subunit protein bL33 (55 aa).

The protein belongs to the bacterial ribosomal protein bL33 family.

This is Large ribosomal subunit protein bL33 from Methylobacterium radiotolerans (strain ATCC 27329 / DSM 1819 / JCM 2831 / NBRC 15690 / NCIMB 10815 / 0-1).